A 528-amino-acid polypeptide reads, in one-letter code: Peptide chain release factor 3 (528 aa).

The tr-type G domain maps to 10–278 (DRRRTFGIIS…AFVEQAPVPR (269 aa)). GTP contacts are provided by residues 19 to 26 (SHPDAGKT), 87 to 91 (DTPGH), and 141 to 144 (NKLD).

It belongs to the TRAFAC class translation factor GTPase superfamily. Classic translation factor GTPase family. PrfC subfamily.

The protein resides in the cytoplasm. In terms of biological role, increases the formation of ribosomal termination complexes and stimulates activities of RF-1 and RF-2. It binds guanine nucleotides and has strong preference for UGA stop codons. It may interact directly with the ribosome. The stimulation of RF-1 and RF-2 is significantly reduced by GTP and GDP, but not by GMP. This Syntrophotalea carbinolica (strain DSM 2380 / NBRC 103641 / GraBd1) (Pelobacter carbinolicus) protein is Peptide chain release factor 3.